The chain runs to 858 residues: Elongation factor 2 (858 aa).

The tr-type G domain occupies 17–362 (ANIRNMSVIA…MITIHLPSPV (346 aa)). GTP is bound by residues 26 to 33 (AHVDHGKS), 158 to 161 (NKMD), and 216 to 218 (SGL). H715 is subject to Diphthamide.

This sequence belongs to the TRAFAC class translation factor GTPase superfamily. Classic translation factor GTPase family. EF-G/EF-2 subfamily. In terms of assembly, binds to 80S ribosomes. Actively translating ribosomes show mutually exclusive binding of eIF5a (EIF5A or EIF5A2) and EEF2/eEF2. Interacts with serbp1; interaction sequesters eef2/eEF2 at the A-site of the ribosome, thereby blocking the interaction sites of the mRNA-tRNA complex, promoting ribosome stabilization and hibernation. Interacts with habp4; interaction takes place at the A-site of hibernating ribosomes and promotes ribosome stabilization.

It is found in the cytoplasm. The protein resides in the nucleus. The enzyme catalyses GTP + H2O = GDP + phosphate + H(+). Functionally, catalyzes the GTP-dependent ribosomal translocation step during translation elongation. During this step, the ribosome changes from the pre-translocational (PRE) to the post-translocational (POST) state as the newly formed A-site-bound peptidyl-tRNA and P-site-bound deacylated tRNA move to the P and E sites, respectively. Catalyzes the coordinated movement of the two tRNA molecules, the mRNA and conformational changes in the ribosome. The sequence is that of Elongation factor 2 from Xenopus laevis (African clawed frog).